A 1150-amino-acid polypeptide reads, in one-letter code: Apomucin (1150 aa).

Low complexity-rich tracts occupy residues 1–36 and 46–79; these read ETAR…TGAS and SVAG…SSVG. A run of 5 repeats spans residues 1-44, 45-125, 126-206, 207-287, and 288-368. The interval 1 to 368 is 6 X 81 AA tandem repeats; sequence ETARPSVAGS…ASIGQPETSR (368 aa). 2 disordered regions span residues 1-730 and 776-925; these read ETAR…KTGI and APGS…PAPL. O-linked (GalNAc...) serine; partial glycans are attached at residues S46, S50, S51, S57, S58, and S61. The O-linked (GalNAc...) threonine; partial glycan is linked to T66. S67 carries O-linked (GalNAc...) serine; partial glycosylation. T73 and T74 each carry an O-linked (GalNAc...) threonine; partial glycan. 2 O-linked (GalNAc...) serine; partial glycosylation sites follow: S76 and S77. O-linked (GalNAc...) threonine; partial glycans are attached at residues T81 and T83. Over residues 86 to 117 the composition is skewed to low complexity; the sequence is PSVAGSGTTGTVSGASGSTGSSSGSPGATGAS. Residues S87 and S91 are each glycosylated (O-linked (GalNAc...) serine; partial). T93, T94, and T96 each carry an O-linked (GalNAc...) threonine; partial glycan. S98, S101, and S103 each carry an O-linked (GalNAc...) serine; partial glycan. Residue T104 is glycosylated (O-linked (GalNAc...) threonine; partial). O-linked (GalNAc...) serine; partial glycosylation is found at S106, S107, S108, and S110. An O-linked (GalNAc...) threonine; partial glycan is attached at T114. Residue S117 is glycosylated (O-linked (GalNAc...) serine; partial). The O-linked (GalNAc...) threonine; partial glycan is linked to T123. O-linked (GalNAc...) serine; partial glycosylation is present at S124. Composition is skewed to low complexity over residues 127–160, 167–198, 208–241, 248–279, 289–322, 329–360, and 370–396; these read SVAG…SSVG, PSVA…TGAS, and SVAG…ATTS. One copy of the 6; truncated repeat lies at 369-391; it reads ISVAGSSGAPAVSSGASQAAGTS. N418 is a glycosylation site (N-linked (GlcNAc...) asparagine). Over residues 442-459 the composition is skewed to polar residues; it reads SYNTEATTSIGRSGTTHT. Over residues 473–506 the composition is skewed to low complexity; that stretch reads SHSSQSSKPGSSVTTPGSPESGSETGTSGEFSTT. Polar residues-rich tracts occupy residues 507-517 and 537-547; these read VISGSSHTEAT and ELSGTTIASGN. N-linked (GlcNAc...) asparagine glycosylation is present at N547. Positions 548-558 are enriched in low complexity; the sequence is ATTEATTSTET. Residues 564-586 are compositionally biased toward polar residues; the sequence is TGAQTTVPGSQVSGSETGTSEAV. A compositionally biased stretch (low complexity) spans 590–625; that stretch reads AIASGSSSTGTTSGASDSQVTGSRTGTTGVVLGTTV. 2 stretches are compositionally biased toward polar residues: residues 626 to 635 and 643 to 661; these read APGSSSTGAT and GTRS…TTYE. Over residues 671–682 the composition is skewed to gly residues; sequence GGSGTPGSGINT. Composition is skewed to polar residues over residues 688–697, 706–729, and 779–788; these read QVTGIQTGTT, LPGS…SKTG, and SFNTKATTPT. The segment covering 790–833 has biased composition (low complexity); the sequence is VRAATGAGTAVGATSRSTGISTGPENSTPGTTETGSGTTSSPGG. Residues 875-908 show a composition bias toward polar residues; sequence ETTTAPRISATGSTSVSKEITASPKVSSPETTAG. Residues N917, N985, N1002, and N1068 are each glycosylated (N-linked (GlcNAc...) asparagine). In terms of domain architecture, VWFC spans 929–995; sequence PVCHGPLGEE…DTCCEIGHCE (67 aa). Intrachain disulfides connect C1062–C1109, C1076–C1123, C1085–C1139, and C1089–C1141. The CTCK domain maps to 1062–1146; it reads CKPSPVNVTV…TACSCLDPCQ (85 aa).

Intermolecular disulfide bonds could help maintain a multimeric mucin structure. Extensively O-glycosylated on most but not all Ser and Thr residues of the repeat units. Highest glycosylation appears to occur on Ser residues which have Gly at positions at +2 or -2 from the glycosylation site or, where Gly is the penultimate residue. The presence of proline (usually at position +3 or -3) appears to also enhance glycosylation. As to expression, submaxillary mucosae.

The protein localises to the secreted. Apomucin is part of mucin, the major glycoprotein synthesized and secreted by mucous cells of the submaxillary gland. Its highly viscous aqueous solutions serve to lubricate the oral cavity and to protect it from the external environment. This is Apomucin from Sus scrofa (Pig).